Here is a 396-residue protein sequence, read N- to C-terminus: Ornithine aminotransferase (396 aa).

The residue at position 255 (K255) is an N6-(pyridoxal phosphate)lysine.

Belongs to the class-III pyridoxal-phosphate-dependent aminotransferase family. OAT subfamily. It depends on pyridoxal 5'-phosphate as a cofactor.

Its subcellular location is the cytoplasm. It catalyses the reaction a 2-oxocarboxylate + L-ornithine = L-glutamate 5-semialdehyde + an L-alpha-amino acid. The protein operates within amino-acid biosynthesis; L-proline biosynthesis; L-glutamate 5-semialdehyde from L-ornithine: step 1/1. Functionally, catalyzes the interconversion of ornithine to glutamate semialdehyde. The protein is Ornithine aminotransferase of Staphylococcus epidermidis (strain ATCC 35984 / DSM 28319 / BCRC 17069 / CCUG 31568 / BM 3577 / RP62A).